We begin with the raw amino-acid sequence, 237 residues long: Histone H1E (237 aa).

Residues 1-21 (MSDPAQEVEAPVEAAPVASSP) are compositionally biased toward low complexity. Disordered stretches follow at residues 1–56 (MSDP…PVSE) and 109–237 (LQAK…KKAK). A compositionally biased stretch (basic and acidic residues) spans 26–42 (EKAPKAPKAEKPKSDKP). The region spanning 50-124 (THPPVSEMVV…GASGSFKLPP (75 aa)) is the H15 domain. Residues 182-195 (AKPAAKKAAAPKPK) are compositionally biased toward low complexity. A compositionally biased stretch (basic and acidic residues) spans 200–209 (PKKEVKPKKE). Residues 210 to 237 (AKPKKAAAKPAKKPAAKPAKKPAAKKAK) show a composition bias toward basic residues.

The protein belongs to the histone H1/H5 family.

It localises to the nucleus. Its subcellular location is the chromosome. In terms of biological role, histones H1 are necessary for the condensation of nucleosome chains into higher-order structures. The polypeptide is Histone H1E (Chironomus tentans (Midge)).